The sequence spans 565 residues: Proline--tRNA ligase (565 aa).

This sequence belongs to the class-II aminoacyl-tRNA synthetase family. ProS type 1 subfamily. In terms of assembly, homodimer.

The protein localises to the cytoplasm. It carries out the reaction tRNA(Pro) + L-proline + ATP = L-prolyl-tRNA(Pro) + AMP + diphosphate. Catalyzes the attachment of proline to tRNA(Pro) in a two-step reaction: proline is first activated by ATP to form Pro-AMP and then transferred to the acceptor end of tRNA(Pro). As ProRS can inadvertently accommodate and process non-cognate amino acids such as alanine and cysteine, to avoid such errors it has two additional distinct editing activities against alanine. One activity is designated as 'pretransfer' editing and involves the tRNA(Pro)-independent hydrolysis of activated Ala-AMP. The other activity is designated 'posttransfer' editing and involves deacylation of mischarged Ala-tRNA(Pro). The misacylated Cys-tRNA(Pro) is not edited by ProRS. This chain is Proline--tRNA ligase, found in Lactobacillus helveticus (strain DPC 4571).